Reading from the N-terminus, the 1466-residue chain is Retrovirus-related Pol polyprotein from transposon RE1 (1466 aa).

The disordered stretch occupies residues 227–270 (SHRNTTTTNNNNNGNRNNRYDNRNNNNNSKPWQQSSTNFHPNNN). Over residues 229–254 (RNTTTTNNNNNGNRNNRYDNRNNNNN) the composition is skewed to low complexity. Polar residues predominate over residues 255-270 (SKPWQQSSTNFHPNNN). A CCHC-type zinc finger spans residues 278–294 (KCQICGVQGHSAKRCSQ). D334 serves as the catalytic For protease activity. In terms of domain architecture, Integrase catalytic spans 519 to 682 (NSTRPLEYIY…SPFQKLFGTS (164 aa)). Residues D530 and D592 each contribute to the Mg(2+) site. A disordered region spans residues 772 to 927 (WSPHTTLPTR…NNNQAPLNTH (156 aa)). Low complexity-rich tracts occupy residues 796–827 (AATP…SFPS) and 836–898 (QNGP…SSTS). Positions 899-912 (PTPPSILIHPPPPL) are enriched in pro residues. Over residues 915–927 (IVNNNNQAPLNTH) the composition is skewed to polar residues. One can recognise a Reverse transcriptase Ty1/copia-type domain in the interval 982 to 1225 (NHTWDLVPPP…ITAKPVTTPM (244 aa)).

The enzyme catalyses DNA(n) + a 2'-deoxyribonucleoside 5'-triphosphate = DNA(n+1) + diphosphate. The protein is Retrovirus-related Pol polyprotein from transposon RE1 (RE1) of Arabidopsis thaliana (Mouse-ear cress).